The sequence spans 309 residues: MVGFKATDVPPTATVKFLGAGTAACIADLITFPLDTAKVRLQIQGERQGPMQAAASAQYRGVLGTILTMVRTEGPRSLYSGLVAGLQRQMSFASVRIGLYDSVKQFYTKGSEHAGIGSRLLAGSTTGALAVAVAQPTDVVKVRFQAQARAGAGRRYQSTVEAYKTIAREEGFRGLWKGTSPNVARNAIVNCAELVTYDLIKDTLLKAHLMTDDLPCHFTSAFGAGFCTTVIASPVDVVKTRYMNSALGQYSSAGHCALTMLQKEGPQAFYKGFMPSFLRLGSWNVVMFVTYEQLKRALMAARASREAPF.

At 1–16 the chain is on the mitochondrial intermembrane side; that stretch reads MVGFKATDVPPTATVK. Solcar repeat units follow at residues 11–106, 114–203, and 212–297; these read PTAT…VKQF, AGIG…IKDT, and DDLP…LKRA. The tract at residues 16–63 is important for interaction with long-chain fatty acids; it reads KFLGAGTAACIADLITFPLDTAKVRLQIQGERQGPMQAAASAQYRGVL. The chain crosses the membrane as a helical span at residues 17–40; it reads FLGAGTAACIADLITFPLDTAKVR. The Mitochondrial matrix segment spans residues 41–77; it reads LQIQGERQGPMQAAASAQYRGVLGTILTMVRTEGPRS. The helical transmembrane segment at 78 to 103 threads the bilayer; that stretch reads LYSGLVAGLQRQMSFASVRIGLYDSV. At 104–119 the chain is on the mitochondrial intermembrane side; the sequence is KQFYTKGSEHAGIGSR. Residues 120–145 traverse the membrane as a helical segment; that stretch reads LLAGSTTGALAVAVAQPTDVVKVRFQ. Over 146-173 the chain is Mitochondrial matrix; sequence AQARAGAGRRYQSTVEAYKTIAREEGFR. Residues 174-199 form a helical membrane-spanning segment; it reads GLWKGTSPNVARNAIVNCAELVTYDL. At 200–217 the chain is on the mitochondrial intermembrane side; sequence IKDTLLKAHLMTDDLPCH. Residues 218-242 form a helical membrane-spanning segment; the sequence is FTSAFGAGFCTTVIASPVDVVKTRY. Topologically, residues 243 to 268 are mitochondrial matrix; it reads MNSALGQYSSAGHCALTMLQKEGPQA. The chain crosses the membrane as a helical span at residues 269 to 294; that stretch reads FYKGFMPSFLRLGSWNVVMFVTYEQL. Residues 278–285 form an important for interaction with long-chain fatty acids region; sequence LRLGSWNV. At 295-309 the chain is on the mitochondrial intermembrane side; sequence KRALMAARASREAPF.

Belongs to the mitochondrial carrier (TC 2.A.29) family. Homotetramer. Adopts an asymmetrical dimer of dimers functional form. Interacts with MICU1 (when methylated); leading to decrease the calcium sensitivity of MICU1.

The protein resides in the mitochondrion inner membrane. The catalysed reaction is L-aspartate(out) + phosphate(in) + H(+)(in) = L-aspartate(in) + phosphate(out) + H(+)(out). It catalyses the reaction oxaloacetate(out) + phosphate(in) + H(+)(in) = oxaloacetate(in) + phosphate(out) + H(+)(out). It carries out the reaction (S)-malate(out) + phosphate(in) + H(+)(in) = (S)-malate(in) + phosphate(out) + H(+)(out). The enzyme catalyses malonate(out) + phosphate(in) + H(+)(in) = malonate(in) + phosphate(out) + H(+)(out). The catalysed reaction is sulfate(out) + phosphate(in) + H(+)(in) = sulfate(in) + phosphate(out) + H(+)(out). It catalyses the reaction (S)-malate(out) = (S)-malate(in). It carries out the reaction L-aspartate(out) = L-aspartate(in). The enzyme catalyses phosphate(in) = phosphate(out). The catalysed reaction is chloride(in) = chloride(out). It catalyses the reaction H(+)(in) = H(+)(out). It carries out the reaction a long-chain fatty acid(out) = a long-chain fatty acid(in). Antiporter that exports dicarboxylate intermediates of the Krebs cycle in exchange for phosphate plus a proton across the inner membrane of mitochondria, a process driven by mitochondrial motive force with an overall impact on glycolysis, glutaminolysis and glutathione-dependent redox balance. Continuous export of oxaloacetate and related four-carbon dicarboxylates from mitochondrial matrix into the cytosol negatively regulates the oxidation of acetyl-CoA substrates via the Krebs cycle lowering the ATP/ADP ratio and reactive oxygen species (ROS) production. May mediate inducible proton entry into the mitochondrial matrix affecting ATP turnover as a protection mechanism against oxidative stress. The proton currents are most likely associated with fatty acid flipping across the inner membrane of mitochondria in a metabolic process regulated by free fatty acids and purine nucleotides. Regulates the use of glucose as a source of energy. Required for glucose-induced DRP1-dependent mitochondrial fission and neuron activation in the ventromedial nucleus of the hypothalamus (VMH). This mitochondrial adaptation mechanism modulates the VMH pool of glucose-excited neurons with an impact on systemic glucose homeostasis. Regulates ROS levels and metabolic reprogramming of macrophages during the resolution phase of inflammation. Attenuates ROS production in response to IL33 to preserve the integrity of the Krebs cycle required for persistent production of itaconate and subsequent GATA3-dependent differentiation of inflammation-resolving alternatively activated macrophages. Can unidirectionally transport anions including L-malate, L-aspartate, phosphate and chloride ions. Does not mediate adaptive thermogenesis. The chain is Dicarboxylate carrier UCP2 (UCP2) from Bos taurus (Bovine).